Consider the following 43-residue polypeptide: Metallothionein-3 (43 aa).

This sequence belongs to the metallothionein superfamily. Type 5 family.

Its function is as follows. This protein binds cations of several transition elements. Thought to be involved in metal ion homeostasis. This is Metallothionein-3 (MtnC) from Drosophila melanogaster (Fruit fly).